A 329-amino-acid polypeptide reads, in one-letter code: MKQPVFAVTSGEPAGIGPDICLDLAFARLPCRCAVLGDKHLLRARAEALGKSVVLRDFDPESGGAAYGELEVLHIPAVEAVEAGKLNPANAAYVLQLLDTALAGISDGIFDGIVTAPLHKGIINDARASTGFFSGHTEYLAEKSGTGQVVMMLAGKDLRVALVTTHLPLKDVAAAITQPLIESVARILHHDLKHKFGIKNPKILVAGLNPHAGEGGHLGHEETDTIIPALENLRREGINLAGPYPADTLFQPFMLEGADAVLAMYHDQGLPVLKYHSFGQGVNITLGLPFIRTSVDHGTALDLAATGRADSGSLITAVETAVEMARGSL.

Residues His-136 and Thr-137 each contribute to the substrate site. Residues His-166, His-211, and His-266 each coordinate a divalent metal cation. Residues Lys-274, Asn-283, and Arg-292 each coordinate substrate.

This sequence belongs to the PdxA family. Homodimer. The cofactor is Zn(2+). It depends on Mg(2+) as a cofactor. Co(2+) serves as cofactor.

It localises to the cytoplasm. It carries out the reaction 4-(phosphooxy)-L-threonine + NAD(+) = 3-amino-2-oxopropyl phosphate + CO2 + NADH. It functions in the pathway cofactor biosynthesis; pyridoxine 5'-phosphate biosynthesis; pyridoxine 5'-phosphate from D-erythrose 4-phosphate: step 4/5. Catalyzes the NAD(P)-dependent oxidation of 4-(phosphooxy)-L-threonine (HTP) into 2-amino-3-oxo-4-(phosphooxy)butyric acid which spontaneously decarboxylates to form 3-amino-2-oxopropyl phosphate (AHAP). This Neisseria meningitidis serogroup A / serotype 4A (strain DSM 15465 / Z2491) protein is 4-hydroxythreonine-4-phosphate dehydrogenase.